Reading from the N-terminus, the 119-residue chain is uncharacterized protein (119 aa).

Helical transmembrane passes span 19–39 (FYPS…PSFL) and 68–88 (FPWF…PWLL).

The protein resides in the membrane. This is an uncharacterized protein from Saccharomyces cerevisiae (strain ATCC 204508 / S288c) (Baker's yeast).